We begin with the raw amino-acid sequence, 117 residues long: Large ribosomal subunit protein uL18 (117 aa).

The protein belongs to the universal ribosomal protein uL18 family. As to quaternary structure, part of the 50S ribosomal subunit; part of the 5S rRNA/L5/L18/L25 subcomplex. Contacts the 5S and 23S rRNAs.

This is one of the proteins that bind and probably mediate the attachment of the 5S RNA into the large ribosomal subunit, where it forms part of the central protuberance. This Photobacterium profundum (strain SS9) protein is Large ribosomal subunit protein uL18.